A 344-amino-acid chain; its full sequence is Meiotic recombination protein DMC1 homolog A (344 aa).

An ATP-binding site is contributed by 133–140; that stretch reads GEFRSGKT. Residue Arg-235 coordinates dsDNA. SsDNA contacts are provided by Arg-235, Phe-238, Arg-241, Arg-247, and Arg-315. Positions 241 and 247 each coordinate dsDNA.

It belongs to the RecA family. DMC1 subfamily. Expressed in meiotic young panicles.

The protein localises to the nucleus. Recombinase that may participate in meiotic recombination, specifically in homologous strand assimilation, which is required for the resolution of meiotic double-strand breaks. Exhibits DNA-dependent ATPase activity when bound to single-stranded DNA (ssDNA). Mediates renaturation of homologous complementary strands as well as assimilation of single strands into homologous supercoiled duplexes leading to D-loop formation. Binds circular single-stranded DNA (ssDNA) and circular double-stranded DNA (dsDNA) in vitro. Catalyzes DNA homologous renaturation and DNA strand exchange. The rates of these activities are dependent on the state of ATP hydrolysis. Forms helical filaments along ssDNA and dsDNA, and promotes strand exchange between ssDNA and dsDNA with long DNA substrates of several thousand base pairs. The presence of the replication protein A is not required for this activity. Seems to be required for homologous pairing and subsequent chromosome segregation during male meiosis. May be not directly required for homologous pairing during male meiosis. Required for synaptonemal complex assembly and crossover formation. Functions redundantly with DMC1B. The protein is Meiotic recombination protein DMC1 homolog A of Oryza sativa subsp. japonica (Rice).